Consider the following 349-residue polypeptide: Small ribosomal subunit protein uS2 (349 aa).

It belongs to the universal ribosomal protein uS2 family.

The protein is Small ribosomal subunit protein uS2 of Methylobacterium sp. (strain 4-46).